Here is a 256-residue protein sequence, read N- to C-terminus: MLLAIDCGNTNTVFAIHDGTDFVAVWRTATEHQRTADQYYVWLQSLMQMQKIEVEITEVIISSTVPRVVFNLRVLCDRYFNCRPLVVGKPGCALPVDVRVDAGTQVGPDRLVNTVAGFTQFGGDLIVVDFGTATTFDVVDVDGAYVGGVIAPGVNLSLEALHNAAAALPHVDISMPDTVVGTNTVACMQSGVFWGYVGLVREICAQIKAERARPMRVIATGGLAPLFSQGAELFDAWVDDLTMQGLVTINSYNREA.

6–13 (DCGNTNTV) serves as a coordination point for ATP. 107–110 (GPDR) lines the substrate pocket. The Proton acceptor role is filled by Asp-109. Asp-129 contacts K(+). Residue Thr-132 participates in ATP binding. Residue Thr-184 participates in substrate binding.

Belongs to the type III pantothenate kinase family. As to quaternary structure, homodimer. Requires NH4(+) as cofactor. K(+) serves as cofactor.

The protein resides in the cytoplasm. The catalysed reaction is (R)-pantothenate + ATP = (R)-4'-phosphopantothenate + ADP + H(+). It participates in cofactor biosynthesis; coenzyme A biosynthesis; CoA from (R)-pantothenate: step 1/5. In terms of biological role, catalyzes the phosphorylation of pantothenate (Pan), the first step in CoA biosynthesis. The sequence is that of Type III pantothenate kinase from Dinoroseobacter shibae (strain DSM 16493 / NCIMB 14021 / DFL 12).